A 180-amino-acid polypeptide reads, in one-letter code: ATP synthase subunit delta (180 aa).

It belongs to the ATPase delta chain family. As to quaternary structure, F-type ATPases have 2 components, F(1) - the catalytic core - and F(0) - the membrane proton channel. F(1) has five subunits: alpha(3), beta(3), gamma(1), delta(1), epsilon(1). F(0) has three main subunits: a(1), b(2) and c(10-14). The alpha and beta chains form an alternating ring which encloses part of the gamma chain. F(1) is attached to F(0) by a central stalk formed by the gamma and epsilon chains, while a peripheral stalk is formed by the delta and b chains.

Its subcellular location is the cell membrane. F(1)F(0) ATP synthase produces ATP from ADP in the presence of a proton or sodium gradient. F-type ATPases consist of two structural domains, F(1) containing the extramembraneous catalytic core and F(0) containing the membrane proton channel, linked together by a central stalk and a peripheral stalk. During catalysis, ATP synthesis in the catalytic domain of F(1) is coupled via a rotary mechanism of the central stalk subunits to proton translocation. Functionally, this protein is part of the stalk that links CF(0) to CF(1). It either transmits conformational changes from CF(0) to CF(1) or is implicated in proton conduction. The chain is ATP synthase subunit delta from Limosilactobacillus reuteri (strain DSM 20016) (Lactobacillus reuteri).